Consider the following 173-residue polypeptide: Adenine phosphoribosyltransferase (173 aa).

It belongs to the purine/pyrimidine phosphoribosyltransferase family. In terms of assembly, homodimer.

It is found in the cytoplasm. The enzyme catalyses AMP + diphosphate = 5-phospho-alpha-D-ribose 1-diphosphate + adenine. It functions in the pathway purine metabolism; AMP biosynthesis via salvage pathway; AMP from adenine: step 1/1. Functionally, catalyzes a salvage reaction resulting in the formation of AMP, that is energically less costly than de novo synthesis. This chain is Adenine phosphoribosyltransferase, found in Thermotoga maritima (strain ATCC 43589 / DSM 3109 / JCM 10099 / NBRC 100826 / MSB8).